The sequence spans 440 residues: Argininosuccinate lyase (440 aa).

Belongs to the lyase 1 family. Argininosuccinate lyase subfamily.

The protein localises to the cytoplasm. The enzyme catalyses 2-(N(omega)-L-arginino)succinate = fumarate + L-arginine. The protein operates within amino-acid biosynthesis; L-arginine biosynthesis; L-arginine from L-ornithine and carbamoyl phosphate: step 3/3. This is Argininosuccinate lyase from Clostridium botulinum (strain Okra / Type B1).